Consider the following 457-residue polypeptide: Exodeoxyribonuclease 7 large subunit (457 aa).

Belongs to the XseA family. Heterooligomer composed of large and small subunits.

The protein resides in the cytoplasm. It catalyses the reaction Exonucleolytic cleavage in either 5'- to 3'- or 3'- to 5'-direction to yield nucleoside 5'-phosphates.. In terms of biological role, bidirectionally degrades single-stranded DNA into large acid-insoluble oligonucleotides, which are then degraded further into small acid-soluble oligonucleotides. The protein is Exodeoxyribonuclease 7 large subunit of Photorhabdus laumondii subsp. laumondii (strain DSM 15139 / CIP 105565 / TT01) (Photorhabdus luminescens subsp. laumondii).